The following is a 569-amino-acid chain: MTEQTDVDVVIVGAGPAGLTLANILGLEGVRVLVVDERDKLIDYPRGVGLDDESLRTFQAIGLVDRVLPHTVPNQILRFFDAKRNLLAEMAPPDARFGWPKRNGFVQPMVDAELFGGLQRFDNVEVRFGHRMHQCTQTTDRVEVEFDGGQASVSARYVVGCDGGRSVTRRLMGVSFDGTTSSTRWLVVDIANDPLGHPNSEVGADPRRPYVSIAIAHGIRRFEFMIHPDETDEEADDPAFVRRMLGQLIPYPERVDMIRHRVYTHHSRIAGSFREGRLMLAGDAAHLMPVWQGQGYNSGIRDAANLGWKLAAVVTGRAGEELLDTYDVERRKHARAMIDLSTMVGRVISPTNRKVAALRDRVIHAASAVPSLKRYVLEMRFKPMPRYQQGAVLHHAHAAPNSPTGTLFIQPRVDTRDTQNALLDDVLGTGFAVVCWSNNLRAVLGEEAFGRWKALGAKFVEVRPMSQLRWPGHDDPDVAVIGDRTGALKAWFDVHTESVLFVRPDRCIAAACIAQRAPEISEGLFAALHLTSGAHLTQGGGTDGEKPDRAVLHVAQPAAESSGTGAGTS.

Residues 8–37 (DVVI…VVDE) and 273–283 (FREGRLMLAGD) each bind FAD.

It belongs to the PheA/TfdB FAD monooxygenase family. It depends on FAD as a cofactor.

The catalysed reaction is 3-(3-hydroxyphenyl)propanoate + NADH + O2 + H(+) = 3-(2,3-dihydroxyphenyl)propanoate + NAD(+) + H2O. It carries out the reaction (2E)-3-(3-hydroxyphenyl)prop-2-enoate + NADH + O2 + H(+) = (2E)-3-(2,3-dihydroxyphenyl)prop-2-enoate + NAD(+) + H2O. Its pathway is aromatic compound metabolism; 3-phenylpropanoate degradation. In terms of biological role, catalyzes the insertion of one atom of molecular oxygen into position 2 of the phenyl ring of 3-(3-hydroxyphenyl)propionate (3-HPP) and hydroxycinnamic acid (3HCI). This is 3-(3-hydroxy-phenyl)propionate/3-hydroxycinnamic acid hydroxylase from Mycolicibacterium gilvum (strain PYR-GCK) (Mycobacterium gilvum (strain PYR-GCK)).